A 1026-amino-acid chain; its full sequence is Multidrug resistance protein MdtC (1026 aa).

The Cytoplasmic portion of the chain corresponds to methionine 1 to leucine 6. The helical transmembrane segment at phenylalanine 7–phenylalanine 29 threads the bilayer. The Periplasmic segment spans residues arginine 30–glutamate 335. A helical transmembrane segment spans residues glutamate 336 to leucine 353. The Cytoplasmic portion of the chain corresponds to arginine 354–threonine 359. A helical membrane pass occupies residues leucine 360–leucine 379. Residues cysteine 380–serine 388 lie on the Periplasmic side of the membrane. Residues leucine 389–alanine 411 form a helical membrane-spanning segment. Residues arginine 412–glutamate 430 lie on the Cytoplasmic side of the membrane. A helical transmembrane segment spans residues valine 431 to glycine 453. The Periplasmic segment spans residues glycine 454 to leucine 467. A helical transmembrane segment spans residues serine 468–leucine 490. Residues lysine 491–glutamine 852 lie on the Cytoplasmic side of the membrane. The helical transmembrane segment at leucine 853–valine 875 threads the bilayer. The Periplasmic portion of the chain corresponds to histidine 876–alanine 894. A helical membrane pass occupies residues leucine 895–valine 917. Topologically, residues lysine 918–cysteine 947 are cytoplasmic. A helical membrane pass occupies residues leucine 948–leucine 970. Residues serine 971–isoleucine 984 lie on the Periplasmic side of the membrane. Residues threonine 985–phenylalanine 1007 form a helical membrane-spanning segment. Over phenylalanine 1008–isoleucine 1026 the chain is Cytoplasmic.

It belongs to the resistance-nodulation-cell division (RND) (TC 2.A.6) family. MdtC subfamily. In terms of assembly, part of a tripartite efflux system composed of MdtA, MdtB and MdtC. MdtC forms a heteromultimer with MdtB.

It is found in the cell inner membrane. The chain is Multidrug resistance protein MdtC from Salmonella typhimurium (strain LT2 / SGSC1412 / ATCC 700720).